Here is a 408-residue protein sequence, read N- to C-terminus: Ubiquitin-associated domain-containing protein 1 (408 aa).

Positions 14–98 (LRLQVCTMEG…LLLIKKRAPP (85 aa)) constitute a Ubiquitin-like domain. Positions 100-119 (LPKMADVSAEEKRKQEQKAP) are disordered. Positions 108–119 (AEEKRKQEQKAP) are enriched in basic and acidic residues. A UBA 1 domain is found at 185–231 (DEDEEDRVDEIALRQLTEMGFPESRAVKALRLNHMSVTQAMEWLIEH). Residues 235-275 (PAVDAPLPGQTPSEAAAEAGASSAEATAGPSSEAGGEEAKD) are disordered. The span at 245 to 268 (TPSEAAAEAGASSAEATAGPSSEA) shows a compositional bias: low complexity. A UBA 2 domain is found at 291-331 (RPDPRAVIALMEMGFDEKEVVDALRVNNNQQNAACEWLLGD). One can recognise an STI1 domain in the interval 356-395 (NPVVQLGLTNPKTLLAFEDMLENPLNSTQWMNDPETGPVM).

In terms of assembly, component of the KPC complex.

It localises to the cytoplasm. Its pathway is protein modification; protein ubiquitination. In terms of biological role, non-catalytic component of the KPC complex, a E3 ubiquitin-protein ligase complex that mediates polyubiquitination of target proteins, such as CDKN1B and NFKB1. Within the KPC complex, UBAC1 acts as an adapter that promotes the transfer of target proteins that have been polyubiquitinated by RNF123/KPC1 to the 26S proteasome. This is Ubiquitin-associated domain-containing protein 1 (UBAC1) from Gallus gallus (Chicken).